The chain runs to 278 residues: Indole-3-glycerol phosphate synthase (278 aa).

It belongs to the TrpC family.

It carries out the reaction 1-(2-carboxyphenylamino)-1-deoxy-D-ribulose 5-phosphate + H(+) = (1S,2R)-1-C-(indol-3-yl)glycerol 3-phosphate + CO2 + H2O. It participates in amino-acid biosynthesis; L-tryptophan biosynthesis; L-tryptophan from chorismate: step 4/5. This Pseudomonas paraeruginosa (strain DSM 24068 / PA7) (Pseudomonas aeruginosa (strain PA7)) protein is Indole-3-glycerol phosphate synthase.